A 156-amino-acid polypeptide reads, in one-letter code: MESKENNILRLNRVADSFVQFFNNREFNNLELISQIFNNPESDQWWMSGDENMYPFSGWKPIQKRLNDMIPLIHGYDQFSFTESNKTFNIEKNLIIMEARTSAVGYGDNIYINEYAFFLTVNNDGKICLIKEYFDPSEILKYSLSNKKLTELYHKV.

The protein belongs to the UPF0523 family.

The protein is UPF0523 protein C of Dictyostelium discoideum (Social amoeba).